The chain runs to 545 residues: Probable quinate permease (545 aa).

The Cytoplasmic segment spans residues methionine 1–tyrosine 22. The chain crosses the membrane as a helical span at residues leucine 23–glycine 43. The Extracellular segment spans residues threonine 44 to asparagine 66. Residues leucine 67–alanine 87 form a helical membrane-spanning segment. The Cytoplasmic portion of the chain corresponds to tyrosine 88 to arginine 97. Residues tryptophan 98 to asparagine 118 traverse the membrane as a helical segment. The Extracellular segment spans residues glycine 119 to arginine 130. A helical membrane pass occupies residues valine 131–leucine 151. Residues alanine 152–arginine 159 lie on the Cytoplasmic side of the membrane. The helical transmembrane segment at leucine 160–phenylalanine 180 threads the bilayer. Over glycine 181 to tryptophan 193 the chain is Extracellular. The chain crosses the membrane as a helical span at residues isoleucine 194–valine 214. At arginine 215–arginine 285 the chain is on the cytoplasmic side. A helical membrane pass occupies residues leucine 286–tyrosine 306. The Extracellular portion of the chain corresponds to tyrosine 307–leucine 325. The helical transmembrane segment at threonine 326 to isoleucine 346 threads the bilayer. Residues aspartate 347 to arginine 352 are Cytoplasmic-facing. Residues leucine 353–isoleucine 373 form a helical membrane-spanning segment. Over lysine 374–aspartate 384 the chain is Extracellular. The helical transmembrane segment at alanine 385–tyrosine 405 threads the bilayer. Residues threonine 406–tyrosine 457 are Cytoplasmic-facing. A helical membrane pass occupies residues glycine 458–isoleucine 478. Residues proline 479 to alanine 545 are Extracellular-facing. The segment at isoleucine 520–alanine 545 is disordered.

It belongs to the major facilitator superfamily. Sugar transporter (TC 2.A.1.1) family. As to quaternary structure, interacts with creB. Ubiquitinated. Deubiquitinated by creB, probably to control its activity or amount.

It localises to the cell membrane. Functionally, integral membrane transporter that imports quinic acid to be catabolized as a carbon source. This is Probable quinate permease (qutD) from Aspergillus terreus (strain NIH 2624 / FGSC A1156).